Here is a 394-residue protein sequence, read N- to C-terminus: Potassium channel subfamily K member 18 (394 aa).

The Cytoplasmic segment spans residues 1–31; the sequence is MEAEEPPEARRCCPEALGKARGCCPEALGKL. A helical membrane pass occupies residues 32 to 52; the sequence is LPGLCFLCCLVTYALVGAALF. Residue Asn83 is glycosylated (N-linked (GlcNAc...) asparagine). An intramembrane region (pore-forming) is located at residues 114-140; that stretch reads FLSALFFCCTVFSTVGYGHMYPVTRLG. K(+) contacts are provided by Thr127, Val128, Gly129, and Tyr130. Residues 127 to 132 are selectivity filter 1; that stretch reads TVGYGH. Residues 142-162 traverse the membrane as a helical segment; that stretch reads FLCMLYALFGIPLMFLVLTDI. Over 163–292 the chain is Cytoplasmic; the sequence is GDILATILSR…EVGQQVERLD (130 aa). The interval 210–215 is interaction with calcineurin; that stretch reads PQIVID. The interval 261-266 is interaction with YWHAH; that stretch reads RSNSCP. A phosphoserine mark is found at Ser264 and Ser276. The chain crosses the membrane as a helical span at residues 293–313; that stretch reads IPLPVIALVVFAYISCAAAIL. An intramembrane region (pore-forming) is located at residues 326-340; that stretch reads FYFCFVTLTTIGFGD. The segment at 335–340 is selectivity filter 2; the sequence is TIGFGD. A helical membrane pass occupies residues 347 to 367; sequence HFFLFFSIYIIVGMEILFIAF. Over 368-394 the chain is Cytoplasmic; that stretch reads KLMQNRLLHTYKTLMLFVCQREVSLPW.

Belongs to the two pore domain potassium channel (TC 1.A.1.8) family. In terms of assembly, homodimer. Heterodimer with KCNK2. Heterodimer with KCNK10. Interacts with calcineurin. Interacts with YWHAH, in a phosphorylation-dependent manner. Phosphorylation of Ser-264 is required for the binding of 14-3-3eta/YWHAH. Calcineurin-mediated dephosphorylation of Ser-276 enhances channel activity. Post-translationally, N-glycosylated. In terms of tissue distribution, detected in brain cortex, cerebellum, dorsal root ganglion, spinal cord and testis. High expression in trigeminal ganglion (at protein level), also expressed in autonomic nervous system ganglia such as the stellate ganglion and paravertebral sympathetic ganglia. Expressed in all adult spinal cord and brain regions, with slightly higher expression in thalamus, hypothalamus, hippocampus and posterior corte (at protein level). In non-neuronal tissues, substantial expression found in lung and heart and weal expression in liver, testis, kidney, small intestine and spleen. Expressed in regulatory T cells (at protein level).

Its subcellular location is the cell membrane. It carries out the reaction K(+)(in) = K(+)(out). With respect to regulation, activated upon cell stimulation via Ca(2+)-mobilizing receptors, such as CHRM1/M1 muscarinic receptor and AGTR1/AT1a angiotensin receptor. Activated by volatile anesthetics, such as isoflurane and inhibited by local anesthetics such as bupivacaine and lidocaine. Inhibited by extracellular acidic pH. Inhibited by Zn(2+) ions. Inhibited by hydroxy-alpha-sanshool, an ingredient of Schezuan pepper. Inhibited by Ba(2+) ions. K(+) channel that conducts outward and inward rectifying currents at depolarized and hyperpolarized membrane potentials, respectively. The outward rectifying currents are voltage-dependent, coupled to K(+) electrochemical gradient across the membrane, whereas the inward currents can be induced in response to activation of Ca(2+)-mobilizing receptors. Homo- and heterodimerizes to form functional channels with distinct regulatory and gating properties. In trigeminal ganglia sensory neurons, the heterodimers of KCNK18/TRESK and KCNK2/TREK-1 or KCNK10/TREK-2 inhibit neuronal firing and neurogenic inflammation by stabilizing the resting membrane potential at K(+) equilibrium potential as well as by regulating the threshold of action potentials and the spike frequency. In thymocytes, conducts K(+) currents upon T cell receptor (TCR) signaling leading to sustained Ca(2+) influx and NF-kappa-B activation, FOXP3 transcription and positive selection of regulatory T cell (Treg) progenitor subsets. Appears to mediate the analgesics effects of hydroxy-alpha-sanshool, a metabolite naturally present in Schezuan pepper and other Xanthoxylum plants. This chain is Potassium channel subfamily K member 18, found in Mus musculus (Mouse).